The following is a 153-amino-acid chain: UPF0260 protein YcgN (153 aa).

The protein belongs to the UPF0260 family.

The chain is UPF0260 protein YcgN from Shigella boydii serotype 18 (strain CDC 3083-94 / BS512).